Consider the following 156-residue polypeptide: Transcription antitermination protein NusB (156 aa).

It belongs to the NusB family.

In terms of biological role, involved in transcription antitermination. Required for transcription of ribosomal RNA (rRNA) genes. Binds specifically to the boxA antiterminator sequence of the ribosomal RNA (rrn) operons. In Rickettsia rickettsii (strain Iowa), this protein is Transcription antitermination protein NusB.